The following is a 221-amino-acid chain: Large ribosomal subunit protein uL4 (221 aa).

The disordered stretch occupies residues 45-100; the sequence is ARQGTHKTKNRGEVSGAGRKPFKQKGTGRARQGSIRAPQMTGGGIVHGPTPRDYSQ.

This sequence belongs to the universal ribosomal protein uL4 family. In terms of assembly, part of the 50S ribosomal subunit.

Its function is as follows. One of the primary rRNA binding proteins, this protein initially binds near the 5'-end of the 23S rRNA. It is important during the early stages of 50S assembly. It makes multiple contacts with different domains of the 23S rRNA in the assembled 50S subunit and ribosome. In terms of biological role, forms part of the polypeptide exit tunnel. This is Large ribosomal subunit protein uL4 from Leifsonia xyli subsp. xyli (strain CTCB07).